Consider the following 562-residue polypeptide: MTIPHMKYAVSKTSENKVSNTVSPTQDKDAIRKQPDDIINNDEPSHKKIKVAQPDSLRETNTTDPLGHTKAALGEVASMELKPTNDMDPLAVSAASVVSMSNDVLKPETPKGPIIISKNPSNGIFYGPSFTKRESLNARMFLKYYGAHKFLDTYLPEDLNSLYIYYLIKLLGFEVKDQALIGTINSIVHINSQERVQDLGSAISVTNVEDPLAKKQTVRLIKDLQRAINKVLCTRLRLSNFFTIDHFIQKLHTARKILVLTGAGVSTSLGIPDFRSSEGFYSKIKHLGLDDPQDVFNYNIFMHDPSVFYNIANMVLPPEKIYSPLHSFIKMLQMKGKLLRNYTQNIDNLESYAGISTDKLVQCHGSFATATCVTCHWNLPGERIFNKIRNLELPLCPYCYKKRREYFPEGYNNKVGVAASQGSMSERPPYILNSYGVLKPDITFFGEALPNKFHKSIREDILECDLLICIGTSLKVAPVSEIVNMVPSHVPQVLINRDPVKHAEFDLSLLGYCDDIAAMVAQKCGWTIPHKKWNDLKNKNFKCQEKDKGVYVVTSDEHPKTL.

A disordered region spans residues 1–67 (MTIPHMKYAV…RETNTTDPLG (67 aa)). Polar residues predominate over residues 11–25 (SKTSENKVSNTVSPT). Positions 26–36 (QDKDAIRKQPD) are enriched in basic and acidic residues. The Deacetylase sirtuin-type domain occupies 237 to 527 (RLSNFFTIDH…AMVAQKCGWT (291 aa)). NAD(+) contacts are provided by residues 262–281 (GAGVSTSLGIPDFRSSEGFY) and 344–347 (QNID). The Proton acceptor role is filled by His364. Residues Cys372, Cys375, Cys396, and Cys399 each coordinate Zn(2+). Residues 471–473 (GTS), 496–498 (NRD), and Cys513 contribute to the NAD(+) site.

The protein belongs to the sirtuin family. Class I subfamily. As to quaternary structure, homomultimer. Forms a complex with SIR3 and SIR4. Component of the RENT complex, at least composed of SIR2, CDC14 and NET1. The RENT complex interacts with FOB1. Interacts with ESC8. Interacts with and ZDS2. Interacts with MCM10. Interacts with SLX5. Interacts with NSI1. It depends on Zn(2+) as a cofactor.

Its subcellular location is the nucleus. It localises to the nucleolus. The catalysed reaction is N(6)-acetyl-L-lysyl-[protein] + NAD(+) + H2O = 2''-O-acetyl-ADP-D-ribose + nicotinamide + L-lysyl-[protein]. With respect to regulation, its activity is increased by calorie restriction, which slows the pace of aging and increases maximum lifespan. Activated by resveratrol (3,5,4'-trihydroxy-trans-stilbene), which is found in red wine. NAD-dependent deacetylase, which participates in a wide range of cellular events including chromosome silencing, chromosome segregation, DNA recombination and the determination of life span. Involved in transcriptional repression of the silent mating-type loci HML and HMR and telomeric silencing via its association with SIR3 and SIR4. Plays a central role in ribosomal DNA (rDNA) silencing via its association with the RENT complex, preventing hyperrecombination, and repressing transcription from foreign promoters, which contributes to extending life span. Probably represses transcription via the formation of heterochromatin structure, which involves the compaction of chromatin fiber into a more condensed form, although this complex in at least one case can still bind euchromatic levels of positive transcription regulators. Although it displays some NAD-dependent histone deacetylase activity on histone H3K9Ac and H3K14Ac and histone H4K16Ac in vitro, such activity is unclear in vivo and may not be essential. The protein is NAD-dependent histone deacetylase SIR2 (SIR2) of Saccharomyces cerevisiae (strain ATCC 204508 / S288c) (Baker's yeast).